The primary structure comprises 317 residues: Aspartate carbamoyltransferase catalytic subunit (317 aa).

2 residues coordinate carbamoyl phosphate: Arg65 and Thr66. Lys93 lines the L-aspartate pocket. Carbamoyl phosphate-binding residues include Arg115, His145, and Gln148. 2 residues coordinate L-aspartate: Arg178 and Arg233. Residues Gly274 and Pro275 each coordinate carbamoyl phosphate.

This sequence belongs to the aspartate/ornithine carbamoyltransferase superfamily. ATCase family. In terms of assembly, heterododecamer (2C3:3R2) of six catalytic PyrB chains organized as two trimers (C3), and six regulatory PyrI chains organized as three dimers (R2).

It catalyses the reaction carbamoyl phosphate + L-aspartate = N-carbamoyl-L-aspartate + phosphate + H(+). It functions in the pathway pyrimidine metabolism; UMP biosynthesis via de novo pathway; (S)-dihydroorotate from bicarbonate: step 2/3. Functionally, catalyzes the condensation of carbamoyl phosphate and aspartate to form carbamoyl aspartate and inorganic phosphate, the committed step in the de novo pyrimidine nucleotide biosynthesis pathway. This chain is Aspartate carbamoyltransferase catalytic subunit, found in Methylobacillus flagellatus (strain ATCC 51484 / DSM 6875 / VKM B-1610 / KT).